Consider the following 489-residue polypeptide: Serine/threonine-protein kinase dyf-5 (489 aa).

The 281-residue stretch at 11–291 folds into the Protein kinase domain; sequence YLMTKRLGDG…ANQSLRYKYF (281 aa). Residues 17–25 and K40 each bind ATP; that span reads LGDGTFGEV. The active-site Proton acceptor is D132. Disordered regions lie at residues 366–385 and 452–489; these read EKSDNKPLGPTKSNEAKPTA and QTGPTVSNQTNNHSANNSHSPNKMSNTGRVDWAAKYVK. The segment covering 458–473 has biased composition (low complexity); that stretch reads SNQTNNHSANNSHSPN.

Belongs to the protein kinase superfamily. CMGC Ser/Thr protein kinase family. RCK subfamily. Mg(2+) is required as a cofactor. Expressed in head neurons including amphid and labial sensory neurons and 3 pairs of neurons in the tail including phasmid sensory neurons. In male, expressed in the tail including the sensory rays and the spicule.

The protein resides in the perikaryon. It is found in the cell projection. The protein localises to the dendrite. It localises to the axon. Its subcellular location is the cilium. The catalysed reaction is L-seryl-[protein] + ATP = O-phospho-L-seryl-[protein] + ADP + H(+). The enzyme catalyses L-threonyl-[protein] + ATP = O-phospho-L-threonyl-[protein] + ADP + H(+). Its function is as follows. Serine/threonine-protein kinase which is required for ciliogenesis. Regulates the length and the morphology of sensory neuron cilia. In addition, plays a role in the anterograde intraflagellar transport (IFT) in the cilia by regulating the undocking of kinesin-II motor complex (composed of klp-11, klp-20 and kap-1) before reaching the distal segment and the docking of kinesin motor osm-3 onto IFT cargos. This is Serine/threonine-protein kinase dyf-5 from Caenorhabditis elegans.